A 577-amino-acid polypeptide reads, in one-letter code: General transcription factor IIF subunit 1 (577 aa).

A disordered region spans residues 1–36; that stretch reads MSSASKSTPSAASGSSTSAAAAAAASVASGSASSSA. Phosphoserine occurs at positions 183, 246, 250, and 252. A disordered region spans residues 236–508; it reads KITDMDEWID…TSLPTSFSGG (273 aa). A compositionally biased stretch (acidic residues) spans 240–256; the sequence is MDEWIDSEDESDSEDEE. Residues 257–271 show a composition bias toward basic and acidic residues; that stretch reads DKKKKEQEDSDDGKA. The segment covering 272 to 285 has biased composition (basic residues); the sequence is KGKGKKGADKKKKK. The segment covering 289–304 has biased composition (acidic residues); sequence DDEAFEESDDGDEEGR. A compositionally biased stretch (basic and acidic residues) spans 319–341; it reads PEAKVDKDMKGVAEEDALRKLLT. Thr-341 is modified (phosphothreonine). Phosphoserine occurs at positions 342, 352, and 355. Basic and acidic residues predominate over residues 362–376; it reads GEKKKKDKGKDEVSK. The span at 392–406 shows a compositional bias: low complexity; the sequence is SNGSGDSSTDFSSDS. Positions 423-437 are enriched in basic and acidic residues; that stretch reads VVKDKDKEKEKEKES. Low complexity predominate over residues 438 to 456; it reads AASSKVIASSSNANKSRSA. A phosphoserine mark is found at Ser-453 and Ser-455. Thr-457 carries the post-translational modification Phosphothreonine. Polar residues-rich tracts occupy residues 471 to 489 and 496 to 506; these read SLPS…TSTP and EISTSLPTSFS. Ser-482 and Ser-484 each carry phosphoserine. Phosphothreonine is present on Thr-488.

The protein belongs to the TFIIF alpha subunit family. As to quaternary structure, heterodimer of an alpha and a beta subunit. Post-translationally, phosphorylated on Ser and other residues by TAF1 and casein kinase II-like kinases.

It localises to the nucleus. TFIIF is a general transcription initiation factor that binds to RNA polymerase II and helps to recruit it to the initiation complex in collaboration with TFIIB. It promotes transcription elongation. This is General transcription factor IIF subunit 1 from Drosophila melanogaster (Fruit fly).